The sequence spans 266 residues: Serine/arginine-rich splicing factor 12 (266 aa).

Positions 42–266 (ARPRRPRAPR…SRSYHHKNSW (225 aa)) are disordered. Residues 43–62 (RPRRPRAPRPRLRLRGRPGR) are compositionally biased toward basic residues. The segment covering 102–114 (KSKERHLCSPSDH) has biased composition (basic and acidic residues). Residues 115–127 (RRSRSPSQRRSRS) are compositionally biased toward basic residues. A compositionally biased stretch (basic and acidic residues) spans 133 to 144 (GRDRRHSDSLKE). Low complexity predominate over residues 151–166 (SYSQSKSRSKSLPRQS). The segment covering 183–194 (GRSRSKSLPKRS) has biased composition (basic residues). Composition is skewed to polar residues over residues 202 to 212 (SRSPQKQTGSG) and 235 to 244 (AYTSSGSKTQ). Residues 245–266 (TTKHSHLRSHSRSRSYHHKNSW) show a composition bias toward basic residues.

Belongs to the splicing factor SR family.

The protein localises to the nucleus. In terms of biological role, splicing factor that seems to antagonize SR proteins in pre-mRNA splicing regulation. The protein is Serine/arginine-rich splicing factor 12 (Srsf12) of Mus musculus (Mouse).